A 500-amino-acid chain; its full sequence is Lysine--tRNA ligase (500 aa).

2 residues coordinate Mg(2+): glutamate 409 and glutamate 416.

It belongs to the class-II aminoacyl-tRNA synthetase family. In terms of assembly, homodimer. Mg(2+) is required as a cofactor.

The protein resides in the cytoplasm. It carries out the reaction tRNA(Lys) + L-lysine + ATP = L-lysyl-tRNA(Lys) + AMP + diphosphate. This is Lysine--tRNA ligase from Lysinibacillus sphaericus (strain C3-41).